Reading from the N-terminus, the 460-residue chain is Protein Peter pan (460 aa).

Residues 28-290 (PHSFVIHRGL…LIKIEEGLLT (263 aa)) form the Brix domain. 2 positions are modified to phosphoserine: serine 237 and serine 239. A coiled-coil region spans residues 295 to 350 (YHDHVVKTEDEKETLRKLVEKKRKQKEQRKKEQAENRARNLKLKKDEKWAAKRAAE). The segment at 315–460 (KKRKQKEQRK…FDHRKSRKSK (146 aa)) is disordered. Composition is skewed to basic and acidic residues over residues 323–355 (RKKE…RTDS) and 401–446 (AKLD…DPKN). Threonine 353 bears the Phosphothreonine mark. Serine 355 carries the phosphoserine modification. Basic residues predominate over residues 447-460 (KRAKFDHRKSRKSK).

Belongs to the PPAN family. As to expression, ubiquitous.

In terms of biological role, required for initiation of larval growth and normal mitotic growth but is not absolutely required for general biosynthesis or DNA replication. Required for progression of normal oogenesis and maturation of some imaginal tissues into adult structures. The sequence is that of Protein Peter pan (ppan) from Drosophila melanogaster (Fruit fly).